A 158-amino-acid chain; its full sequence is Glycine/sarcosine/betaine reductase complex component A (158 aa).

Residue Sec-44 is part of the active site. Position 44 (Sec-44) is a non-standard amino acid, selenocysteine.

The protein belongs to the GrdA family. Monomer. Component of the glycine, sarcosine and betaine reductase complexes, together with components B and C.

It catalyses the reaction acetyl phosphate + [thioredoxin]-disulfide + NH4(+) + H2O = [thioredoxin]-dithiol + glycine + phosphate + H(+). The enzyme catalyses acetyl phosphate + methylamine + [thioredoxin]-disulfide + H2O = sarcosine + [thioredoxin]-dithiol + phosphate + H(+). The catalysed reaction is acetyl phosphate + trimethylamine + [thioredoxin]-disulfide + H2O = glycine betaine + [thioredoxin]-dithiol + phosphate + H(+). In terms of biological role, in the first step of glycine, betaine and sarcosine reductases, the substrate is bound to component PB via a Schiff base intermediate. Then the PB-activated substrate is nucleophilically attacked by the selenol anion of component PA to transform it to a carboxymethylated selenoether and the respective amine. By action of component PC, acetyl phosphate is formed, leaving component PA in its oxidized state. Finally component PA becomes reduced by the thioredoxin system to start a new catalytic cycle of reductive deamination. This is Glycine/sarcosine/betaine reductase complex component A from Alkaliphilus metalliredigens (strain QYMF).